The primary structure comprises 546 residues: CTP synthase (546 aa).

The interval 1 to 266 (MTTRYIFVTG…DQLVTKRFGI (266 aa)) is amidoligase domain. Ser-14 contributes to the CTP binding site. Ser-14 provides a ligand contact to UTP. ATP is bound by residues 15 to 20 (SLGKGI) and Asp-72. Asp-72 and Glu-140 together coordinate Mg(2+). Residues 147–149 (DIE), 187–192 (KTKPTQ), and Lys-223 contribute to the CTP site. UTP-binding positions include 187–192 (KTKPTQ) and Lys-223. An ATP-binding site is contributed by 239–241 (KDV). Residues 291–542 (TIGMVGKYIE…VAAAAAYQKR (252 aa)) enclose the Glutamine amidotransferase type-1 domain. Gly-352 contributes to the L-glutamine binding site. The active-site Nucleophile; for glutamine hydrolysis is the Cys-379. Residues 380–383 (LGMQ), Glu-403, and Arg-470 each bind L-glutamine. Residues His-515 and Glu-517 contribute to the active site.

It belongs to the CTP synthase family. As to quaternary structure, homotetramer.

The catalysed reaction is UTP + L-glutamine + ATP + H2O = CTP + L-glutamate + ADP + phosphate + 2 H(+). It catalyses the reaction L-glutamine + H2O = L-glutamate + NH4(+). The enzyme catalyses UTP + NH4(+) + ATP = CTP + ADP + phosphate + 2 H(+). It participates in pyrimidine metabolism; CTP biosynthesis via de novo pathway; CTP from UDP: step 2/2. Allosterically activated by GTP, when glutamine is the substrate; GTP has no effect on the reaction when ammonia is the substrate. The allosteric effector GTP functions by stabilizing the protein conformation that binds the tetrahedral intermediate(s) formed during glutamine hydrolysis. Inhibited by the product CTP, via allosteric rather than competitive inhibition. Its function is as follows. Catalyzes the ATP-dependent amination of UTP to CTP with either L-glutamine or ammonia as the source of nitrogen. Regulates intracellular CTP levels through interactions with the four ribonucleotide triphosphates. In Shewanella pealeana (strain ATCC 700345 / ANG-SQ1), this protein is CTP synthase.